The following is a 346-amino-acid chain: FAS-associated factor 2 (346 aa).

Position 68 is an N6-acetyllysine (lysine 68). Residues 176–251 (SERLEREERN…EEKERKLECL (76 aa)) adopt a coiled-coil conformation. The interval 200–262 (ASLRADQEKE…PEPSPDDPDS (63 aa)) is disordered. Residues 204-249 (ADQEKERKKREERERKRRKEEEVQQQKLAEERRRQNLQEEKERKLE) show a composition bias toward basic and acidic residues. Residues 258–340 (DDPDSVKIIF…GLSHTEVLFV (83 aa)) enclose the UBX domain.

In terms of assembly, identified in a complex that contains SEL1L, OS9, FAF2/UBXD8, UBE2J1/UBC6E and AUP1. Interacts with YOD1. Interacts (via N-terminus) with UBQLN2 (via C-terminus). Interacts with PNPLA2 and UBAC2. Interacts with ZFAND2B; probably through VCP. Interacts with LMBR1L.

It is found in the cytoplasm. The protein localises to the lipid droplet. The protein resides in the endoplasmic reticulum. Plays an important role in endoplasmic reticulum-associated degradation (ERAD) that mediates ubiquitin-dependent degradation of misfolded endoplasmic reticulum proteins. By controlling the steady-state expression of the IGF1R receptor, indirectly regulates the insulin-like growth factor receptor signaling pathway. Involved in inhibition of lipid droplet degradation by binding to phospholipase PNPL2 and inhibiting its activity by promoting dissociation of PNPL2 from its endogenous activator, ABHD5 which inhibits the rate of triacylglycerol hydrolysis. Involved in stress granule disassembly: associates with ubiquitinated G3BP1 in response to heat shock, thereby promoting interaction between ubiquitinated G3BP1 and VCP, followed by G3BP1 extraction from stress granules and stress granule disassembly. In Rattus norvegicus (Rat), this protein is FAS-associated factor 2 (Faf2).